Here is a 485-residue protein sequence, read N- to C-terminus: Expansin-like protein 8 (485 aa).

Residues Met1 to Ala21 form the signal peptide. The Extracellular segment spans residues Asp22–Thr464. Residues Leu26–Asn139 form the Expansin-like EG45 domain. Cystine bridges form between Cys29–Cys70 and Cys73–Cys134. Asn117 and Asn365 each carry an N-linked (GlcNAc...) asparagine glycan. Residues Glu408–Gly436 are disordered. Residues Ser414–Gly431 show a composition bias toward low complexity. Asn454 is a glycosylation site (N-linked (GlcNAc...) asparagine). A helical transmembrane segment spans residues Asn465–Phe485.

This sequence belongs to the expansin family. Expansin A subfamily.

The protein resides in the membrane. May serve to lubricate the movement of the cellulose microfibrils during cell growth and wall extension and/or may serve to maintain the fluid state of the slug cell wall. The polypeptide is Expansin-like protein 8 (expl8) (Dictyostelium discoideum (Social amoeba)).